Reading from the N-terminus, the 1043-residue chain is Liprin-alpha-4 (1043 aa).

Coiled-coil stretches lie at residues 24–332 (EKVR…GRGG) and 426–470 (ILDA…RVTS). Residues 498-617 (SASPPLSGRS…AKRKGIKSSI (120 aa)) form a disordered region. A Phosphoserine modification is found at Ser500. Polar residues predominate over residues 505–516 (GRSTPKLTSRSA). Position 541 is a phosphoserine (Ser541). Basic and acidic residues predominate over residues 544–555 (SREENREDKATI). The segment covering 590 to 602 (QDSNPSSSNSSQD) has biased composition (low complexity). SAM domains lie at 688–754 (WDGP…MVSL), 803–867 (NHEW…LKRL), and 891–960 (WTND…LLAL). Residues 864–890 (LKRLNYDRKELEKRREESQHEIKDVLV) adopt a coiled-coil conformation.

It belongs to the liprin family. Liprin-alpha subfamily. Forms homodimers and heterodimers with liprins-alpha and liprins-beta. Interacts with the second PTPase domain of PTPRD, PTPRF and PTPRS. Interacts with RIMS1 and RIMS2. Interacts with GIT1 and GIT2. Interacts with GRIP1. Interacts with KIF1A.

The protein resides in the cytoplasm. It localises to the cell surface. In terms of biological role, may regulate the disassembly of focal adhesions. May localize receptor-like tyrosine phosphatases type 2A at specific sites on the plasma membrane, possibly regulating their interaction with the extracellular environment and their association with substrates. This is Liprin-alpha-4 (Ppfia4) from Rattus norvegicus (Rat).